A 340-amino-acid polypeptide reads, in one-letter code: Guanine nucleotide-binding protein G(I)/G(S)/G(T) subunit beta-1 (340 aa).

7 WD repeats span residues 53-83 (GHLA…IIWD), 95-125 (LRSS…SIYN), 141-170 (GHTG…ALWD), 182-212 (GHTG…KLWD), 224-254 (GHES…RLFD), 268-298 (NIIC…NVWD), and 310-340 (GHDN…KIWN).

Belongs to the WD repeat G protein beta family. In terms of assembly, g proteins are composed of 3 units, alpha, beta and gamma.

Its function is as follows. Guanine nucleotide-binding proteins (G proteins) are involved as a modulator or transducer in various transmembrane signaling systems. The beta and gamma chains are required for the GTPase activity, for replacement of GDP by GTP, and for G protein-effector interaction. The polypeptide is Guanine nucleotide-binding protein G(I)/G(S)/G(T) subunit beta-1 (gnb1) (Danio rerio (Zebrafish)).